The chain runs to 46 residues: Mu-segestritoxin-Sf1c (46 aa).

Intrachain disulfides connect C3/C19, C10/C22, C18/C42, and C24/C40. The interval 31–33 is keys region for toxin activity; sequence RPW.

It belongs to the neurotoxin 16 (SFI) family. In terms of tissue distribution, expressed by the venom gland.

It localises to the secreted. In terms of biological role, insecticidal toxin. It inhibits insect voltage-gated sodium channels (Nav) by partially blocking the channel pore in DUM neurons from the American cockroach, not by acting as a gating modifier. The inhibition is only partially reversible after prolonged washout. In vivo, the toxin causes flaccid paralysis followed by death when injected into Heliothis virescens larvae. It also causes uncoordinated movements followed by full paralysis to sheep blowflies (Lucilia cuprina). When the toxin is fused to snowdrop lectin, it is orally active against larvae of the tomato moth (Laconobia oleracea), the rice brown planthopper (Nilaparvata lugens), and the peach-potato aphid (Myzus persicae). The protein is Mu-segestritoxin-Sf1c of Segestria florentina (Tube-web spider).